The sequence spans 122 residues: Small ribosomal subunit protein uS13 (122 aa).

The segment at 96–122 is disordered; that stretch reads PVRGQRTRTNARTRKGPKKTVGVRRAK.

It belongs to the universal ribosomal protein uS13 family. As to quaternary structure, part of the 30S ribosomal subunit. Forms a loose heterodimer with protein S19. Forms two bridges to the 50S subunit in the 70S ribosome.

Located at the top of the head of the 30S subunit, it contacts several helices of the 16S rRNA. In the 70S ribosome it contacts the 23S rRNA (bridge B1a) and protein L5 of the 50S subunit (bridge B1b), connecting the 2 subunits; these bridges are implicated in subunit movement. Contacts the tRNAs in the A and P-sites. The polypeptide is Small ribosomal subunit protein uS13 (Halothermothrix orenii (strain H 168 / OCM 544 / DSM 9562)).